Consider the following 194-residue polypeptide: Large ribosomal subunit protein uL6z/uL6y (194 aa).

Threonine 75 carries the post-translational modification Phosphothreonine.

It belongs to the universal ribosomal protein uL6 family.

The polypeptide is Large ribosomal subunit protein uL6z/uL6y (RPL9B) (Arabidopsis thaliana (Mouse-ear cress)).